A 597-amino-acid chain; its full sequence is Kelch-like protein 21 (597 aa).

Residues 35-103 enclose the BTB domain; sequence LDVTLEAAGG…SYTGRVAVSG (69 aa). Positions 138–239 constitute a BACK domain; it reads CLDMQDFAEA…RRFYLLAHVE (102 aa). Kelch repeat units follow at residues 287–335, 336–382, 384–422, 423–470, 472–512, and 513–560; these read ILVL…ALGN, DIYV…VLNG, LYVV…ACRG, RLYA…TLNG, MYFV…ALGG, and KLYV…SIFR. The segment at 570–597 is disordered; sequence GRGFELNSGSSDVDAGHHRLPQNPEELQ.

Component of the BCR(KLHL21) E3 ubiquitin ligase complex, at least composed of CUL3, KLHL21 and RBX1.

Its subcellular location is the cytoplasm. The protein resides in the cytoskeleton. It localises to the spindle. Its pathway is protein modification; protein ubiquitination. Functionally, substrate-specific adapter of BCR (BTB-CUL3-RBX1) E3 ubiquitin-protein ligase complex required for efficient chromosome alignment and cytokinesis. The BCR(KLHL21) E3 ubiquitin ligase complex regulates localization of the chromosomal passenger complex (CPC) from chromosomes to the spindle midzone in anaphase and mediates the ubiquitination of AURKB. Ubiquitination of AURKB by BCR(KLHL21) E3 ubiquitin ligase complex may not lead to its degradation by the proteasome. This is Kelch-like protein 21 (Klhl21) from Rattus norvegicus (Rat).